Consider the following 419-residue polypeptide: Tyrosine--tRNA ligase (419 aa).

An L-tyrosine-binding site is contributed by Y34. Positions 39–48 (PSGDSMHIGH) match the 'HIGH' region motif. 2 residues coordinate L-tyrosine: Y168 and Q172. Positions 230-234 (KFGKS) match the 'KMSKS' region motif. K233 is a binding site for ATP. Residues 352 to 418 (ANLVDWLVTL…GKKKYFLVSY (67 aa)) enclose the S4 RNA-binding domain.

It belongs to the class-I aminoacyl-tRNA synthetase family. TyrS type 1 subfamily. As to quaternary structure, homodimer.

It localises to the cytoplasm. The enzyme catalyses tRNA(Tyr) + L-tyrosine + ATP = L-tyrosyl-tRNA(Tyr) + AMP + diphosphate + H(+). Catalyzes the attachment of tyrosine to tRNA(Tyr) in a two-step reaction: tyrosine is first activated by ATP to form Tyr-AMP and then transferred to the acceptor end of tRNA(Tyr). The protein is Tyrosine--tRNA ligase of Listeria monocytogenes serotype 4b (strain CLIP80459).